The sequence spans 819 residues: Leucine--tRNA ligase (819 aa).

Positions 42–52 (PYPSGRLHMGH) match the 'HIGH' region motif. The 'KMSKS' region signature appears at 576–580 (KMSKS). Lys579 contacts ATP.

Belongs to the class-I aminoacyl-tRNA synthetase family.

It localises to the cytoplasm. It catalyses the reaction tRNA(Leu) + L-leucine + ATP = L-leucyl-tRNA(Leu) + AMP + diphosphate. The sequence is that of Leucine--tRNA ligase from Nitrosococcus oceani (strain ATCC 19707 / BCRC 17464 / JCM 30415 / NCIMB 11848 / C-107).